Reading from the N-terminus, the 179-residue chain is Large ribosomal subunit protein uL5 (179 aa).

Belongs to the universal ribosomal protein uL5 family. Part of the 50S ribosomal subunit; part of the 5S rRNA/L5/L18/L25 subcomplex. Contacts the 5S rRNA and the P site tRNA. Forms a bridge to the 30S subunit in the 70S ribosome.

In terms of biological role, this is one of the proteins that bind and probably mediate the attachment of the 5S RNA into the large ribosomal subunit, where it forms part of the central protuberance. In the 70S ribosome it contacts protein S13 of the 30S subunit (bridge B1b), connecting the 2 subunits; this bridge is implicated in subunit movement. Contacts the P site tRNA; the 5S rRNA and some of its associated proteins might help stabilize positioning of ribosome-bound tRNAs. In Caldanaerobacter subterraneus subsp. tengcongensis (strain DSM 15242 / JCM 11007 / NBRC 100824 / MB4) (Thermoanaerobacter tengcongensis), this protein is Large ribosomal subunit protein uL5.